A 1105-amino-acid polypeptide reads, in one-letter code: Lysylphosphatidylglycerol biosynthesis bifunctional protein LysX (1105 aa).

Positions 1-603 (MTVTKPRSVQ…LLHHDGSAPD (603 aa)) are phosphatidylglycerol lysyltransferase. 7 helical membrane-spanning segments follow: residues 20–40 (VPAA…LASI), 62–82 (FPDT…ALAA), 86–106 (IAWL…AADI), 117–137 (FGEN…VLGY), 154–174 (AVLV…VDLF), 186–203 (YVAN…DLFT), and 208–228 (VFLN…ATIV). The segment at 604–1105 (VSGLRQSAIA…TLPFPLAKPH (502 aa)) is lysine--tRNA ligase. Mg(2+)-binding residues include aspartate 1017 and glutamate 1024.

In the N-terminal section; belongs to the LPG synthetase family. The protein in the C-terminal section; belongs to the class-II aminoacyl-tRNA synthetase family. Mg(2+) is required as a cofactor.

Its subcellular location is the cell membrane. It carries out the reaction tRNA(Lys) + L-lysine + ATP = L-lysyl-tRNA(Lys) + AMP + diphosphate. It catalyses the reaction L-lysyl-tRNA(Lys) + a 1,2-diacyl-sn-glycero-3-phospho-(1'-sn-glycerol) = a 1,2-diacyl-sn-glycero-3-phospho-1'-(3'-O-L-lysyl)-sn-glycerol + tRNA(Lys). Functionally, catalyzes the production of L-lysyl-tRNA(Lys)transfer and the transfer of a lysyl group from L-lysyl-tRNA(Lys) to membrane-bound phosphatidylglycerol (PG), which produces lysylphosphatidylglycerol (LPG), one of the components of the bacterial membrane with a positive net charge. LPG synthesis contributes to the resistance to cationic antimicrobial peptides (CAMPs) and likely protects M.tuberculosis against the CAMPs produced by competiting microorganisms (bacteriocins). In fact, the modification of anionic phosphatidylglycerol with positively charged L-lysine results in repulsion of the peptides. This is Lysylphosphatidylglycerol biosynthesis bifunctional protein LysX (lysX) from Mycobacterium ulcerans (strain Agy99).